Here is a 197-residue protein sequence, read N- to C-terminus: Transcription factor FapR (197 aa).

It belongs to the FapR family.

In terms of biological role, transcriptional factor involved in regulation of membrane lipid biosynthesis by repressing genes involved in fatty acid and phospholipid metabolism. This is Transcription factor FapR from Bacillus cereus (strain B4264).